The chain runs to 317 residues: UAP56-interacting factor (317 aa).

Residue methionine 1 is modified to N-acetylmethionine. Positions 1 to 26 are disordered; the sequence is MNRFGTRLVGATATPPPPPKARSNEN. Phosphothreonine is present on threonine 14. Serine 23 carries the post-translational modification Phosphoserine. Residues 26 to 44 carry the UAP56-binding motif motif; it reads NLDKIDMSLDDIIKLNRKE. 2 positions are modified to phosphoserine: serine 60 and serine 117. Lysine 139 is covalently cross-linked (Glycyl lysine isopeptide (Lys-Gly) (interchain with G-Cter in SUMO1)). Residue lysine 260 forms a Glycyl lysine isopeptide (Lys-Gly) (interchain with G-Cter in SUMO2) linkage.

This sequence belongs to the UIF family. As to quaternary structure, interacts with DDX39B/UAP56 and NXF1; interaction with DDX39B/UAP56 and NXF1 are mutually exclusive. Interacts with SSRP1; required for its recruitment to mRNAs. Interacts with CHTOP.

The protein localises to the nucleus. The protein resides in the nucleoplasm. Its subcellular location is the nucleus speckle. Functionally, required for mRNA export from the nucleus to the cytoplasm. Acts as an adapter that uses the DDX39B/UAP56-NFX1 pathway to ensure efficient mRNA export and delivering to the nuclear pore. Associates with spliced and unspliced mRNAs simultaneously with ALYREF/THOC4. The chain is UAP56-interacting factor (Fyttd1) from Mus musculus (Mouse).